A 252-amino-acid chain; its full sequence is Major prion protein (252 aa).

The signal sequence occupies residues 1–22; that stretch reads MANLGCWMLFLFVATWSDLGLC. The segment at 23–38 is interaction with ADGRG6; that stretch reads KKRPKPGGWNTGGSRY. An interaction with GRB2, ERI3 and SYN1 region spans residues 23-229; sequence KKRPKPGGWN…ESQAYYQRGS (207 aa). The tract at residues 26 to 106 is disordered; the sequence is PKPGGWNTGG…QWNKPSKPKT (81 aa). 5 consecutive repeat copies span residues 51–58, 59–66, 67–74, 75–82, and 83–90. Residues 51 to 90 are 5 X 8 AA tandem repeats of P-H-G-G-G-W-G-Q; that stretch reads PQGGGWGQPHGGGWGQPHGGGWGQPHGGGWGQPHGGGWGQ. Residues 52–94 show a composition bias toward gly residues; sequence QGGGWGQPHGGGWGQPHGGGWGQPHGGGWGQPHGGGWGQGGGT. Residues H60, G61, G62, H68, G69, G70, H76, G77, G78, H84, G85, and G86 each coordinate Cu(2+). An intrachain disulfide couples C178 to C213. 2 N-linked (GlcNAc...) asparagine glycosylation sites follow: N180 and N196. A lipid anchor (GPI-anchor amidated serine) is attached at S229. The propeptide at 230-252 is removed in mature form; it reads SMVLFSSPPVILLISFLIFLIVG.

The protein belongs to the prion family. As to quaternary structure, monomer and homodimer. Has a tendency to aggregate into amyloid fibrils containing a cross-beta spine, formed by a steric zipper of superposed beta-strands. Soluble oligomers may represent an intermediate stage on the path to fibril formation. Copper binding may promote oligomerization. Interacts with GRB2, APP, ERI3/PRNPIP and SYN1. Mislocalized cytosolically exposed PrP interacts with MGRN1; this interaction alters MGRN1 subcellular location and causes lysosomal enlargement. Interacts with APP. Interacts with KIAA1191. Interacts with ADGRG6.

The protein localises to the cell membrane. It localises to the golgi apparatus. Its function is as follows. Its primary physiological function is unclear. May play a role in neuronal development and synaptic plasticity. May be required for neuronal myelin sheath maintenance. May promote myelin homeostasis through acting as an agonist for ADGRG6 receptor. May play a role in iron uptake and iron homeostasis. Soluble oligomers are toxic to cultured neuroblastoma cells and induce apoptosis (in vitro). Association with GPC1 (via its heparan sulfate chains) targets PRNP to lipid rafts. Also provides Cu(2+) or Zn(2+) for the ascorbate-mediated GPC1 deaminase degradation of its heparan sulfate side chains. The chain is Major prion protein (PRNP) from Callithrix jacchus (White-tufted-ear marmoset).